A 402-amino-acid polypeptide reads, in one-letter code: Tryptophan synthase beta chain 2 (402 aa).

Lys97 is modified (N6-(pyridoxal phosphate)lysine).

The protein belongs to the TrpB family. As to quaternary structure, tetramer of two alpha and two beta chains. It depends on pyridoxal 5'-phosphate as a cofactor.

The enzyme catalyses (1S,2R)-1-C-(indol-3-yl)glycerol 3-phosphate + L-serine = D-glyceraldehyde 3-phosphate + L-tryptophan + H2O. The protein operates within amino-acid biosynthesis; L-tryptophan biosynthesis; L-tryptophan from chorismate: step 5/5. In terms of biological role, the beta subunit is responsible for the synthesis of L-tryptophan from indole and L-serine. The protein is Tryptophan synthase beta chain 2 (trpB2) of Wolinella succinogenes (strain ATCC 29543 / DSM 1740 / CCUG 13145 / JCM 31913 / LMG 7466 / NCTC 11488 / FDC 602W) (Vibrio succinogenes).